Here is a 24-residue protein sequence, read N- to C-terminus: VGTRVVRIEDQQLITQGGTYVEDL.

As to quaternary structure, heterotetramer composed of an alpha, a beta and two gamma chains. Mo-molybdopterin cytosine dinucleotide serves as cofactor.

Active with aldehydes and formate esters as substrates. This is DYE-linked aldehyde dehydrogenase, alpha chain from Amycolatopsis methanolica.